We begin with the raw amino-acid sequence, 145 residues long: Transcription antitermination protein NusB (145 aa).

It belongs to the NusB family.

Functionally, involved in transcription antitermination. Required for transcription of ribosomal RNA (rRNA) genes. Binds specifically to the boxA antiterminator sequence of the ribosomal RNA (rrn) operons. This chain is Transcription antitermination protein NusB, found in Burkholderia lata (strain ATCC 17760 / DSM 23089 / LMG 22485 / NCIMB 9086 / R18194 / 383).